A 700-amino-acid polypeptide reads, in one-letter code: Glutamine synthetase (700 aa).

In terms of domain architecture, GS beta-grasp spans 65–155 (YHFTPPGSSP…LPTAFCSYGG (91 aa)). Positions 159–589 (DRDSLLRSME…TMQEMIRKDL (431 aa)) constitute a GS catalytic domain. Mg(2+) is bound by residues Glu196, Glu198, Glu267, and Glu274. L-glutamate-binding positions include 318–319 (NG) and Gly319. His323 serves as a coordination point for Mg(2+). ATP is bound by residues Ser327 and Arg435. Arg435 lines the L-glutamate pocket. Glu472 is a binding site for Mg(2+).

The protein belongs to the glutamine synthetase family. As to quaternary structure, homohexamer. Mg(2+) serves as cofactor.

It is found in the cytoplasm. It carries out the reaction L-glutamate + NH4(+) + ATP = L-glutamine + ADP + phosphate + H(+). With respect to regulation, the activity of this enzyme is not controlled by adenylation. Its function is as follows. Catalyzes the ATP-dependent biosynthesis of glutamine from glutamate and ammonia. The sequence is that of Glutamine synthetase from Butyrivibrio fibrisolvens.